Consider the following 465-residue polypeptide: Ribulose bisphosphate carboxylase large chain (465 aa).

At Lys4 the chain carries N6,N6,N6-trimethyllysine. Substrate is bound by residues Asn113 and Thr163. Lys165 functions as the Proton acceptor in the catalytic mechanism. Lys167 lines the substrate pocket. Positions 191, 193, and 194 each coordinate Mg(2+). Residue Lys191 is modified to N6-carboxylysine. Residue His284 is the Proton acceptor of the active site. Residues Arg285, His317, and Ser369 each coordinate substrate.

Belongs to the RuBisCO large chain family. Type I subfamily. In terms of assembly, heterohexadecamer of 8 large chains and 8 small chains; disulfide-linked. The disulfide link is formed within the large subunit homodimers. Mg(2+) is required as a cofactor. In terms of processing, the disulfide bond which can form in the large chain dimeric partners within the hexadecamer appears to be associated with oxidative stress and protein turnover.

It localises to the plastid. The protein resides in the chloroplast. It carries out the reaction 2 (2R)-3-phosphoglycerate + 2 H(+) = D-ribulose 1,5-bisphosphate + CO2 + H2O. It catalyses the reaction D-ribulose 1,5-bisphosphate + O2 = 2-phosphoglycolate + (2R)-3-phosphoglycerate + 2 H(+). RuBisCO catalyzes two reactions: the carboxylation of D-ribulose 1,5-bisphosphate, the primary event in carbon dioxide fixation, as well as the oxidative fragmentation of the pentose substrate in the photorespiration process. Both reactions occur simultaneously and in competition at the same active site. The sequence is that of Ribulose bisphosphate carboxylase large chain from Byrsonima crassifolia (Cajuil cimarron).